The primary structure comprises 483 residues: GTPase Obg (483 aa).

The Obg domain maps to 2–159; sequence SRFIDRVVLH…RDLVLELKSV (158 aa). One can recognise an OBG-type G domain in the interval 160–340; that stretch reads ADVGLLGFPS…LTFALAKMVR (181 aa). GTP-binding positions include 166–173, 191–195, 212–215, 292–295, and 321–323; these read GFPSAGKS, FTTLV, DVPG, NKTD, and SAV. Mg(2+)-binding residues include serine 173 and threonine 193. The OCT domain occupies 358 to 438; that stretch reads PVKVKDSSFT…IGDVSFEWEP (81 aa).

It belongs to the TRAFAC class OBG-HflX-like GTPase superfamily. OBG GTPase family. In terms of assembly, monomer. It depends on Mg(2+) as a cofactor.

It localises to the cytoplasm. Its function is as follows. An essential GTPase which binds GTP, GDP and possibly (p)ppGpp with moderate affinity, with high nucleotide exchange rates and a fairly low GTP hydrolysis rate. Plays a role in control of the cell cycle, stress response, ribosome biogenesis and in those bacteria that undergo differentiation, in morphogenesis control. The chain is GTPase Obg from Rhodococcus erythropolis (strain PR4 / NBRC 100887).